Consider the following 571-residue polypeptide: Septation ring formation regulator EzrA (571 aa).

Over 1 to 3 (MYY) the chain is Extracellular. A helical transmembrane segment spans residues 4-22 (MLIGFIIVVIAVISAGYIL). Residues 23–571 (KRKHYQRINE…ESKVSVDDIE (549 aa)) are Cytoplasmic-facing. Coiled-coil stretches lie at residues 170–215 (EAKL…QMER), 248–299 (LAQM…TLEH), 326–374 (DALA…ASGE), 400–437 (NFAEELRSLRKDELEARDDAERMRRAIITLDRKMERER), and 478–529 (RIAE…ENHF).

This sequence belongs to the EzrA family.

The protein localises to the cell membrane. Functionally, negative regulator of FtsZ ring formation; modulates the frequency and position of FtsZ ring formation. Inhibits FtsZ ring formation at polar sites. Interacts either with FtsZ or with one of its binding partners to promote depolymerization. The sequence is that of Septation ring formation regulator EzrA from Listeria innocua serovar 6a (strain ATCC BAA-680 / CLIP 11262).